Consider the following 347-residue polypeptide: MSSKQSADKQKALDSALAQIERQFGKGSIMRLGGENAIQEIEASSTGSLGLDIALGIGGLPMGRIVEIYGPESSGKTTLTLHCIAEQQKRGGVCAFVDAEHALDPQYARKLGVDLDELLISQPDTGEQALEITDTLVRSGAVNMVVVDSVAALTPKSELEGDMGDSSVGVHARLMSQAMRKLTGSISRSKCMVIFINQIRMKIGVMFGSPETTTGGNALKFYSSVRLDIRRIGAIKDRDEVVGNATRVKVVKNKVAPPFKQVEFDIMYGEGISKTGELLDLGVKAGVVDKSGSWFSYGDERIGQGRENAKTFLRENQSIALAIEDKIRAAHGLEFDMSDDGEDILEA.

Glycine 70 to threonine 77 serves as a coordination point for ATP.

The protein belongs to the RecA family.

It localises to the cytoplasm. Its function is as follows. Can catalyze the hydrolysis of ATP in the presence of single-stranded DNA, the ATP-dependent uptake of single-stranded DNA by duplex DNA, and the ATP-dependent hybridization of homologous single-stranded DNAs. It interacts with LexA causing its activation and leading to its autocatalytic cleavage. The protein is Protein RecA of Ruegeria pomeroyi (strain ATCC 700808 / DSM 15171 / DSS-3) (Silicibacter pomeroyi).